Consider the following 188-residue polypeptide: Probable nicotinate-nucleotide adenylyltransferase (188 aa).

The protein belongs to the NadD family.

It catalyses the reaction nicotinate beta-D-ribonucleotide + ATP + H(+) = deamido-NAD(+) + diphosphate. It participates in cofactor biosynthesis; NAD(+) biosynthesis; deamido-NAD(+) from nicotinate D-ribonucleotide: step 1/1. Functionally, catalyzes the reversible adenylation of nicotinate mononucleotide (NaMN) to nicotinic acid adenine dinucleotide (NaAD). This Listeria monocytogenes serotype 4a (strain HCC23) protein is Probable nicotinate-nucleotide adenylyltransferase.